The primary structure comprises 440 residues: Xylose isomerase (440 aa).

Residues Asp307 and Asp309 each contribute to the Mg(2+) site.

This sequence belongs to the xylose isomerase family. In terms of assembly, homotetramer. Requires Mg(2+) as cofactor.

It localises to the cytoplasm. It carries out the reaction alpha-D-xylose = alpha-D-xylulofuranose. The polypeptide is Xylose isomerase (Pectobacterium carotovorum subsp. carotovorum (strain PC1)).